A 417-amino-acid chain; its full sequence is Aminoacyltransferase FemB (417 aa).

This sequence belongs to the FemABX family.

Its subcellular location is the cytoplasm. The catalysed reaction is MurNAc-L-Ala-D-isoglutaminyl-L-Lys-(N(6)-tri-Gly)-D-Ala-D-Ala-diphospho-di-trans,octa-cis-undecaprenyl-GlcNAc + 2 glycyl-tRNA(Gly) = MurNAc-L-Ala-D-isoglutaminyl-L-Lys-(N(6)-penta-Gly)-D-Ala-D-Ala-diphospho-di-trans,octa-cis-undecaprenyl-GlcNAc + 2 tRNA(Gly) + 2 H(+). Functionally, catalyzes the incorporation of amino acid(s) into the interchain peptide bridge of peptidoglycan, using aminoacyl-tRNA as amino acid donor. This is Aminoacyltransferase FemB (femB) from Staphylococcus epidermidis (strain ATCC 12228 / FDA PCI 1200).